The primary structure comprises 440 residues: MPHPEHNTSVFLLSLGCSKNTVDSERLQAQAEASGITFTQQAEEAEVILINTCGFIEDAKEESIMEILAAVDMKNAGTVRQVYVMGCLTELYRNELQEELPEVDRFFGTRELPAVLDALGARYHQELYDHRSLLTPPHSSYLKIAEGCSRACSFCSIPKIRGRYLSQPMEQLLREARLLQENGVKELNLIAQDITVYGVDLYGKQMLNDLLMRLSDMEFRWIRLLYAYPVGFPLEVIDTIGNRSNICNYLDLPLQHCSDPILRSMNRGITKEQSLRLIEEIRNRNPDIRLRTTMIAGYPGETRKEFEEMLEFAGSVRFDRLGCFPYRHEEHSPAYSLIDTVPEEEKQERVSELMELQEEIARKKNEAFVGSLMTVLVDRPEEGEEGLILIGRTEFDAPEVDNECLLESGSPEPSPGTFVQARITGSTAYELHGTVESLME.

Residues 8–124 enclose the MTTase N-terminal domain; sequence TSVFLLSLGC…VLDALGARYH (117 aa). Residues cysteine 17, cysteine 53, cysteine 87, cysteine 148, cysteine 152, and cysteine 155 each contribute to the [4Fe-4S] cluster site. The 230-residue stretch at 134-363 folds into the Radical SAM core domain; it reads LTPPHSSYLK…MELQEEIARK (230 aa). The region spanning 366–437 is the TRAM domain; sequence EAFVGSLMTV…AYELHGTVES (72 aa).

This sequence belongs to the methylthiotransferase family. RimO subfamily. It depends on [4Fe-4S] cluster as a cofactor.

The protein resides in the cytoplasm. The enzyme catalyses L-aspartate(89)-[ribosomal protein uS12]-hydrogen + (sulfur carrier)-SH + AH2 + 2 S-adenosyl-L-methionine = 3-methylsulfanyl-L-aspartate(89)-[ribosomal protein uS12]-hydrogen + (sulfur carrier)-H + 5'-deoxyadenosine + L-methionine + A + S-adenosyl-L-homocysteine + 2 H(+). Catalyzes the methylthiolation of an aspartic acid residue of ribosomal protein uS12. This Chlorobium luteolum (strain DSM 273 / BCRC 81028 / 2530) (Pelodictyon luteolum) protein is Ribosomal protein uS12 methylthiotransferase RimO.